The sequence spans 133 residues: Sporulation-specific protein 2 (133 aa).

The protein belongs to the VPS13 family. Interacts with spo13 and spo15.

The protein localises to the cytoplasm. Its subcellular location is the cytoskeleton. It is found in the microtubule organizing center. It localises to the spindle pole body. In terms of biological role, involved in sporulation. Plays a significant role in modification of the spindle pole body prior to spore formation and is required for initiating forespore membrane formation. Assists in the localization of spo13 to the outer surface of the SPB. This chain is Sporulation-specific protein 2 (spo2), found in Schizosaccharomyces pombe (strain 972 / ATCC 24843) (Fission yeast).